We begin with the raw amino-acid sequence, 225 residues long: Protein ERP3 (225 aa).

The first 23 residues, 1–23 (MSNLCVLFFQFFFLAQFFAEASP), serve as a signal peptide directing secretion. The Lumenal portion of the chain corresponds to 24–195 (LTFELNKGRK…STEHRIVMFS (172 aa)). The GOLD domain occupies 33–172 (KECLYTLTPE…LHVLERNIQY (140 aa)). A compositionally biased stretch (basic residues) spans 129–138 (ERRKARKAQR). The interval 129 to 149 (ERRKARKAQRNLRDSKTDPLQ) is disordered. The helical transmembrane segment at 196–216 (IYGILLIIGMSCAQIAILEFI) threads the bilayer. Topologically, residues 217–225 (FRESRKHNV) are cytoplasmic.

This sequence belongs to the EMP24/GP25L family.

The protein localises to the endoplasmic reticulum membrane. In terms of biological role, involved in vesicular protein trafficking. This is Protein ERP3 (ERP3) from Saccharomyces cerevisiae (strain ATCC 204508 / S288c) (Baker's yeast).